A 241-amino-acid polypeptide reads, in one-letter code: Ribosome-inactivating protein luffaculin 1 (241 aa).

Residues Asn28, Asn33, Asn77, and Asn84 are each glycosylated (N-linked (GlcNAc...) asparagine). Residue Glu159 is part of the active site. N-linked (GlcNAc...) asparagine glycosylation is present at Asn205.

This sequence belongs to the ribosome-inactivating protein family. Type 1 RIP subfamily.

It carries out the reaction Endohydrolysis of the N-glycosidic bond at one specific adenosine on the 28S rRNA.. This chain is Ribosome-inactivating protein luffaculin 1, found in Luffa acutangula (Ridged gourd).